A 252-amino-acid chain; its full sequence is Triosephosphate isomerase (252 aa).

10-12 (NWK) contributes to the substrate binding site. Catalysis depends on His-96, which acts as the Electrophile. Glu-168 serves as the catalytic Proton acceptor. Substrate is bound by residues Gly-174, Ser-214, and 235 to 236 (GG).

Belongs to the triosephosphate isomerase family. As to quaternary structure, homodimer.

It is found in the cytoplasm. It carries out the reaction D-glyceraldehyde 3-phosphate = dihydroxyacetone phosphate. It participates in carbohydrate biosynthesis; gluconeogenesis. Its pathway is carbohydrate degradation; glycolysis; D-glyceraldehyde 3-phosphate from glycerone phosphate: step 1/1. In terms of biological role, involved in the gluconeogenesis. Catalyzes stereospecifically the conversion of dihydroxyacetone phosphate (DHAP) to D-glyceraldehyde-3-phosphate (G3P). This is Triosephosphate isomerase from Lactobacillus delbrueckii subsp. bulgaricus (strain ATCC 11842 / DSM 20081 / BCRC 10696 / JCM 1002 / NBRC 13953 / NCIMB 11778 / NCTC 12712 / WDCM 00102 / Lb 14).